The sequence spans 207 residues: MLGRPKLVLASGSPRRLALLNQAGIEPDALRPADVDETPTKGELPRACANRLARAKAEAALKSVQLDDDLRGAFLLAADTVVAVGRRILPKAELVDEASQCLRLLSGRNHRVYTAVCLVTPKGSFRQRLIETKVRFKRLSEEDIDGYVASGEWRGKAGGYAVQGIAGSFVVKIVGSYTNIVGLPLYETTSLLGGEGYPIRFGWLNAS.

The active-site Proton acceptor is aspartate 79.

Belongs to the Maf family. YhdE subfamily. The cofactor is a divalent metal cation.

The protein resides in the cytoplasm. The catalysed reaction is dTTP + H2O = dTMP + diphosphate + H(+). The enzyme catalyses UTP + H2O = UMP + diphosphate + H(+). Its function is as follows. Nucleoside triphosphate pyrophosphatase that hydrolyzes dTTP and UTP. May have a dual role in cell division arrest and in preventing the incorporation of modified nucleotides into cellular nucleic acids. In Rhodopseudomonas palustris (strain HaA2), this protein is dTTP/UTP pyrophosphatase.